An 89-amino-acid chain; its full sequence is Large ribosomal subunit protein uL29 (89 aa).

It belongs to the universal ribosomal protein uL29 family.

The protein is Large ribosomal subunit protein uL29 of Frankia alni (strain DSM 45986 / CECT 9034 / ACN14a).